We begin with the raw amino-acid sequence, 827 residues long: Ribosome biogenesis protein ERB1 (827 aa).

Residues Met1–Pro129 form a disordered region. Residues Asp7–Lys18 show a composition bias toward basic and acidic residues. Acidic residues predominate over residues Cys45 to Val60. Positions Leu61–Ser77 are enriched in low complexity. Composition is skewed to acidic residues over residues Gly81–Ala99 and Glu108–Asp124. The required for interaction with NOP7 stretch occupies residues Arg291–Ser409. Residues Ser409 to Pro445 form a required for interaction with YTM1 region. WD repeat units lie at residues Gly461–Lys500, Asn509–Glu549, Lys657–Lys695, Pro698–Lys737, Tyr741–Lys780, and Val796–Thr827.

This sequence belongs to the WD repeat BOP1/ERB1 family. In terms of assembly, component of the NOP7 complex, composed of ERB1, NOP7 and YTM1. The complex is held together by ERB1, which interacts with NOP7 via its N-terminal domain and with YTM1 via a high-affinity interaction between the seven-bladed beta-propeller domains of the 2 proteins. The NOP7 complex associates with the 66S pre-ribosome.

It is found in the nucleus. The protein localises to the nucleolus. Its subcellular location is the nucleoplasm. Component of the NOP7 complex, which is required for maturation of the 25S and 5.8S ribosomal RNAs and formation of the 60S ribosome. This Eremothecium gossypii (strain ATCC 10895 / CBS 109.51 / FGSC 9923 / NRRL Y-1056) (Yeast) protein is Ribosome biogenesis protein ERB1.